The chain runs to 450 residues: Phosphoglucosamine mutase (450 aa).

Catalysis depends on serine 101, which acts as the Phosphoserine intermediate. Serine 101, aspartate 242, aspartate 244, and aspartate 246 together coordinate Mg(2+). Serine 101 is subject to Phosphoserine.

It belongs to the phosphohexose mutase family. It depends on Mg(2+) as a cofactor. Post-translationally, activated by phosphorylation.

The enzyme catalyses alpha-D-glucosamine 1-phosphate = D-glucosamine 6-phosphate. Its function is as follows. Catalyzes the conversion of glucosamine-6-phosphate to glucosamine-1-phosphate. The protein is Phosphoglucosamine mutase of Rhodopseudomonas palustris (strain ATCC BAA-98 / CGA009).